The sequence spans 1190 residues: MQKSVRYNEGHALYLAFLARKEGTKRGFLSKKAAEASRWHEKWFALYQNVLFYFEGEQSGRPAGMYLLEGCSCERTPAPPRTNAGPAGARDALDKQYYFTVLFGHEGQKPLELRCEEEQAGKEWMEAIHQASYADILIEREVLMQKYIHLVQIVETEKIAANQLRHQLEDQDTEIERLKSEIVALNKTKERMRPYHTHQEEEDPDIKKIKKVQSFMRGWLCRRKWKTIVQDYICSPHAESMRKRNQIVFTMVEAESEYVHQLYILVNGFLRPLRMAASSKKPPISHDDVSSIFLNSETIMFLHEIFHQGLKARLANWPTLVLADLFDILLPMLNIYQEFVRNHQYSLQVLANCKQNRDFDKLLKQYEGNPACEGRMLETFLTYPMFQIPRYIITLHELLAHTPHEHVERKSLEFAKSKLEELSRVMHDEVSDTENIRKNLAIERMIVEGCDILLDTSQTFIRQGSLIQVPSVERGKLSKVRLGSLSLKKEGERQCFLFTKHFLICTRSSGGKLHLLKTGGVLSLIQCTLIEEPDTSDDDTKGPGHMFGHLDFKIVVEPPDAAPFTVVLLAPSRQEKAAWMSDISQCVDNIRCNGLMTIVFEENSKVTVPHMIKSDARLHKDDTDICFSKTLNSCKVPQIRYASVERLLERLTDLRFLSIDFLNTFLHTYRIFTTAAVVLGKLSDIYKRPFTSIPVRSLELFFATSQNNREHLVDGKSPRLCRKFSSPPPLAVSRTSSPVRARKLSLTSSLNSRIGALDLTTSSSSSSPTTTVHSPAASPPPHTAVPESAPADRAGDSTDMSPCRSPSTTPRHLRYRQPGGQVADSTHCAVSPASAFAIATAAAGHGSPPGFNNERTCDKEFIIRRTATNRVLNVLRHWVSKHSQDFELNNELKMNVLNLLEEVLRDPDLLPQERKATANILRALSQDDQDDIHLKLEDIIQMTDCPKAECFETLSAMELAEQITLLDHIVFRSIPYEEFLGQGWMKLDKNERTPYIMKTSQHFNEMSNLVASQIMNYADISSRANAIEKWVAVADICRCLHNYNGVLEITSALNRSAIYRLKKTWTKVSKQTKALMDKLQKTVSSEGRFKNLRETLKNCNPPAVPYLGMYLTDLAFIEEGTPNFTEEGLVNFSKMRMISHIIREIRQFQQTAYRIDQQPKVIQYLLDKALVIDEDTLYELSLKIEPRLPA.

The region spanning 22 to 133 (EGTKRGFLSK…WMEAIHQASY (112 aa)) is the PH 1 domain. The stretch at 155–193 (ETEKIAANQLRHQLEDQDTEIERLKSEIVALNKTKERMR) forms a coiled coil. Residues 205–234 (DIKKIKKVQSFMRGWLCRRKWKTIVQDYIC) form the IQ domain. Positions 243–429 (KRNQIVFTMV…EELSRVMHDE (187 aa)) constitute a DH domain. The PH 2 domain occupies 470-588 (PSVERGKLSK…WMSDISQCVD (119 aa)). An N-terminal Ras-GEF domain is found at 635 to 755 (KVPQIRYASV…LTSSLNSRIG (121 aa)). The interval 713-744 (VDGKSPRLCRKFSSPPPLAVSRTSSPVRARKL) is disordered. Ser-725 and Ser-726 each carry phosphoserine. Ser-736 carries the phosphoserine; by CDK5 modification. Residues 743–751 (KLSLTSSLN) form a regulates proteasomal degradation region. 2 positions are modified to phosphoserine: Ser-745 and Ser-749. Positions 757 to 826 (LDLTTSSSSS…QPGGQVADST (70 aa)) are disordered. Residues 760-776 (TTSSSSSSPTTTVHSPA) show a composition bias toward low complexity. Residues 798 to 810 (TDMSPCRSPSTTP) are compositionally biased toward polar residues. Residues Ser-801, Ser-805, and Ser-925 each carry the phosphoserine modification. The region spanning 955 to 1187 (SAMELAEQIT…YELSLKIEPR (233 aa)) is the Ras-GEF domain. The segment at 1052 to 1081 (ALNRSAIYRLKKTWTKVSKQTKALMDKLQK) is responsible of the affinity for farnesylated versus geranylgeranylated Ras.

In terms of assembly, homooligomer and heterooligomer with RASGRF1. Interacts with Ras and RAC1. Interacts in a calcium-dependent manner with calmodulin. Interacts with CDK5R1 and probably EPB49. Interacts with the AMPA receptor through GRIA1. Interacts with microtubules. Post-translationally, phosphorylated by CDK5; down-regulates RASGRF2-mediated RAC1 activation. Ubiquitinated upon interaction with Ras. Ubiquitination leads to degradation through the 26S proteasome. Widely expressed. Detected in brain, lung, spleen, pancreas, kidney, liver, heart, mammary gland and skeletal muscle.

It is found in the cytoplasm. The protein localises to the cell membrane. The protein resides in the endoplasmic reticulum membrane. Its function is as follows. Functions as a calcium-regulated nucleotide exchange factor activating both Ras and RAC1 through the exchange of bound GDP for GTP. Preferentially activates HRAS in vivo compared to RRAS based on their different types of prenylation. Functions in synaptic plasticity by contributing to the induction of long term potentiation. The sequence is that of Ras-specific guanine nucleotide-releasing factor 2 (Rasgrf2) from Rattus norvegicus (Rat).